Consider the following 397-residue polypeptide: L-cysteine desulfidase (397 aa).

C23 (proton acceptor) is an active-site residue. Positions 288, 330, and 337 each coordinate [4Fe-4S] cluster.

The protein belongs to the L-cysteine desulfidase family. As to quaternary structure, homotrimer. [4Fe-4S] cluster serves as cofactor.

It catalyses the reaction L-cysteine + H2O = hydrogen sulfide + pyruvate + NH4(+) + H(+). In terms of biological role, catalyzes the cleavage of L-cysteine to form 2-aminoprop-2-enoate and sulfide. The former then spontaneously hydrolyzes to pyruvate and NH(3). May be responsible for the production of sulfide required for the biosynthesis of iron-sulfur centers in this archaea. The protein is L-cysteine desulfidase of Methanococcus maripaludis (strain C7 / ATCC BAA-1331).